The sequence spans 454 residues: tRNA modification GTPase MnmE (454 aa).

(6S)-5-formyl-5,6,7,8-tetrahydrofolate-binding residues include Arg23, Glu80, and Lys120. In terms of domain architecture, TrmE-type G spans 216–377 (GMKVVIAGRP…LRNHLKQSMG (162 aa)). Asn226 is a K(+) binding site. GTP-binding positions include 226–231 (NAGKSS), 245–251 (TDIAGTT), 270–273 (DTAG), 335–338 (NKAD), and 358–360 (SAR). Ser230 is a Mg(2+) binding site. 3 residues coordinate K(+): Thr245, Ile247, and Thr250. Thr251 provides a ligand contact to Mg(2+). Lys454 lines the (6S)-5-formyl-5,6,7,8-tetrahydrofolate pocket.

The protein belongs to the TRAFAC class TrmE-Era-EngA-EngB-Septin-like GTPase superfamily. TrmE GTPase family. Homodimer. Heterotetramer of two MnmE and two MnmG subunits. Requires K(+) as cofactor.

It localises to the cytoplasm. Exhibits a very high intrinsic GTPase hydrolysis rate. Involved in the addition of a carboxymethylaminomethyl (cmnm) group at the wobble position (U34) of certain tRNAs, forming tRNA-cmnm(5)s(2)U34. This is tRNA modification GTPase MnmE from Klebsiella pneumoniae (strain 342).